Here is a 547-residue protein sequence, read N- to C-terminus: Glucose-6-phosphate isomerase (547 aa).

E352 functions as the Proton donor in the catalytic mechanism. Active-site residues include H383 and K511.

Belongs to the GPI family.

Its subcellular location is the cytoplasm. The enzyme catalyses alpha-D-glucose 6-phosphate = beta-D-fructose 6-phosphate. Its pathway is carbohydrate biosynthesis; gluconeogenesis. The protein operates within carbohydrate degradation; glycolysis; D-glyceraldehyde 3-phosphate and glycerone phosphate from D-glucose: step 2/4. Catalyzes the reversible isomerization of glucose-6-phosphate to fructose-6-phosphate. In Magnetococcus marinus (strain ATCC BAA-1437 / JCM 17883 / MC-1), this protein is Glucose-6-phosphate isomerase.